Consider the following 325-residue polypeptide: RepFIB replication protein A (325 aa).

A disordered region spans residues 279-298; sequence APNDESKENPLPPSPAEKVS.

This sequence belongs to the initiator RepB protein family.

This protein is essential for plasmid replication; it is involved in copy control functions. In vitro, binds to the DNA repeat units, BCDD'D'', EFG and HIJ. The protein is RepFIB replication protein A (repA) of Escherichia coli.